The following is a 359-amino-acid chain: MWGRWRGAGGRRGVAQPVIPQMKLLGGRVPLGASALGLLIVCWFYIFPGGERLPGHKEMIRQVLQFGPRWGRNRSSGDSFRKLLQDCCDPPRLFSMTKANTALGENLWYDGEFFQSLTIDNTTRSLFPQDTPIKLPLKRCSVVGNGGILKNSRCGEQIDEADFVMRCNLPPLSREYTDDVGTKTQLVTVNPSIIDKRFQNLLWSRKSFVESVSVYKQSYVYMPAFSTKRGTDPSLRVYYTLEDFGTNQTVLFANPNFLRNVGKFWKSKGVHSKRLSTGLFMVSAALSLCEEVTIYGFWPFQMDLGGRHISHHYYDNMLPLSGVHAMPEEFLQLWHLHKSGVLQMQLDQCKKDVSSKKPH.

Residues 1-28 (MWGRWRGAGGRRGVAQPVIPQMKLLGGR) are Cytoplasmic-facing. Residues 29–49 (VPLGASALGLLIVCWFYIFPG) form a helical; Signal-anchor for type II membrane protein membrane-spanning segment. Residues 50-359 (GERLPGHKEM…KKDVSSKKPH (310 aa)) are Lumenal-facing. 2 N-linked (GlcNAc...) asparagine glycosylation sites follow: asparagine 73 and asparagine 121. Intrachain disulfides connect cysteine 140–cysteine 289 and cysteine 154–cysteine 349. 2 residues coordinate CMP-N-acetyl-beta-neuraminate: asparagine 145 and asparagine 168. A glycan (N-linked (GlcNAc...) asparagine) is linked at asparagine 247. Positions 276, 277, 278, 298, and 312 each coordinate CMP-N-acetyl-beta-neuraminate. The active-site Proton donor/acceptor is histidine 324.

Belongs to the glycosyltransferase 29 family. Expressed in the dorsal blastopore lip and in the presumptive neuroectoderm in stage 11 embryos. During gastrulation, strongly expressed in the involuting mesoderm. At stages 13 and 16, expressed in the neural plate and neural fold, paraxial mesoderm and notochord. At stages 19 and 22 (neural tube and early tailbud), strongly expressed in the neural tube and notochord. At the tadpole stage, expressed in the head region, branchial arches and otic and optic primordia. Also localized in the notochord and weakly expressed in the somites. In adults, expressed in the brain and ovary. Isoform 2 (short) is expressed at a low level in the adult testis and muscle, and at a high level in the skin. Isoform 1 (long) is expressed at a high level in the adult lung and kidney. Both isoforms 1 and 2 are expressed in the gut and liver.

Its subcellular location is the golgi apparatus membrane. It carries out the reaction an N-acetyl-alpha-neuraminyl-(2-&gt;3)-beta-D-galactosyl derivative + CMP-N-acetyl-beta-neuraminate = an N-acetyl-alpha-neuraminyl-(2-&gt;8)-N-acetyl-alpha-neuraminyl-(2-&gt;3)-beta-D-galactosyl derivative + CMP + H(+). The catalysed reaction is a ganglioside GM3 (d18:1(4E)) + CMP-N-acetyl-beta-neuraminate = a ganglioside GD3 (d18:1(4E)) + CMP + H(+). It catalyses the reaction a ganglioside GD3 (d18:1(4E)) + CMP-N-acetyl-beta-neuraminate = a ganglioside GT3 (d18:1(4E)) + CMP + H(+). The enzyme catalyses a ganglioside GD1a (d18:1(4E)) + CMP-N-acetyl-beta-neuraminate = a ganglioside GT1a (d18:1(4E)) + CMP + H(+). It carries out the reaction a ganglioside GT1b (d18:1(4E)) + CMP-N-acetyl-beta-neuraminate = a ganglioside GQ1b (d18:1(4E)) + CMP + H(+). The catalysed reaction is a ganglioside GM1b (d18:1(4E)) + CMP-N-acetyl-beta-neuraminate = a ganglioside GD1c (d18:1(4E)) + CMP + H(+). It catalyses the reaction a ganglioside GD3 + CMP-N-acetyl-beta-neuraminate = a ganglioside GT3 + CMP + H(+). The enzyme catalyses [alpha-N-acetylneuraminyl-(2-&gt;8)](n)-alpha-N-acetylneuraminyl-(2-&gt;8)-alpha-N-acetylneuraminyl-(2-&gt;3)-beta-D-galactosyl-(1-&gt;4)-beta-D-glucosyl-(1&lt;-&gt;1)-ceramide + CMP-N-acetyl-beta-neuraminate = [alpha-N-acetylneuraminyl-(2-&gt;8)](n+1)-alpha-N-acetylneuraminyl-(2-&gt;8)-alpha-N-acetylneuraminyl-(2-&gt;3)-beta-D-galactosyl-(1-&gt;4)-beta-D-glucosyl-(1&lt;-&gt;1)-ceramide + CMP + H(+). It participates in protein modification; protein glycosylation. The protein operates within lipid metabolism; sphingolipid metabolism. In terms of biological role, catalyzes the addition of sialic acid in alpha 2,8-linkage to the sialic acid moiety of the ganglioside GM3 to form ganglioside GD3; gangliosides are a subfamily of complex glycosphingolipds that contain one or more residues of sialic acid. Glycosphingolipids are required for convergence extension movements during early development. Can catalyze the addition of a second alpha-2,8- sialic acid to GD3 to form GT3. Can use GM1b, GD1a and GT1b as acceptor substrates to synthesize GD1c, GT1a and GQ1b respectively. The chain is Alpha-N-acetylneuraminide alpha-2,8-sialyltransferase from Xenopus laevis (African clawed frog).